The chain runs to 266 residues: uncharacterized protein (266 aa).

This sequence belongs to the chlamydial CPn_0087/CT_309/TC_0583 family.

This is an uncharacterized protein from Chlamydia pneumoniae (Chlamydophila pneumoniae).